We begin with the raw amino-acid sequence, 186 residues long: Probable RNA 2'-phosphotransferase (186 aa).

It belongs to the KptA/TPT1 family.

Functionally, removes the 2'-phosphate from RNA via an intermediate in which the phosphate is ADP-ribosylated by NAD followed by a presumed transesterification to release the RNA and generate ADP-ribose 1''-2''-cyclic phosphate (APPR&gt;P). May function as an ADP-ribosylase. The protein is Probable RNA 2'-phosphotransferase of Clostridium perfringens (strain SM101 / Type A).